We begin with the raw amino-acid sequence, 23 residues long: YSSQLAQVQGLIGNVESQLAEIR.

Positions 1 to 23 (YSSQLAQVQGLIGNVESQLAEIR) constitute an IF rod domain. Residues 1 to 23 (YSSQLAQVQGLIGNVESQLAEIR) form a coil 2 region.

The protein belongs to the intermediate filament family.

The chain is Keratin from Cervus elaphus (Red deer).